Here is a 387-residue protein sequence, read N- to C-terminus: MDKKVINDKFTEIFGEQAEATFFSPGRINLIGEHTDYNGGHVFPCAISLGTYGAARKREDNKLRFYSANFEDLGIIETSLDDLKYDKKDNWVNYAKGMIYFLKETGHDVDKGMDIFIEGNIPNGSGLSSSASLEMLIGVIAQELFNLDIDRVDLVKLGMETENKFIGVNSGIMDQFAVGMGKQNQAILLDTNTLEYSYAPVDMGNNVIVIMNTNKRRELADSKYNERRSECETAVGELQAKLDIKTLGELDAQTFDEYAYLIEDENRLKRARHAVWENQRTMQAQAALEEGDLEKFGRLVNASHVSLEHDYEVTGIELDTLAHTAWKQEGVLGARMTGAGFGGCGIAIVDKDKVEAFKENVGKVYTEKIGYAPAFYIAEIADGTKVL.

A substrate-binding site is contributed by 33 to 36 (EHTD). ATP is bound by residues Ser67 and 124 to 130 (GSGLSSS). Mg(2+) contacts are provided by Ser130 and Glu162. The active-site Proton acceptor is Asp174. Tyr224 contributes to the substrate binding site.

The protein belongs to the GHMP kinase family. GalK subfamily.

The protein localises to the cytoplasm. The catalysed reaction is alpha-D-galactose + ATP = alpha-D-galactose 1-phosphate + ADP + H(+). It functions in the pathway carbohydrate metabolism; galactose metabolism. In terms of biological role, catalyzes the transfer of the gamma-phosphate of ATP to D-galactose to form alpha-D-galactose-1-phosphate (Gal-1-P). The protein is Galactokinase of Ligilactobacillus salivarius (strain UCC118) (Lactobacillus salivarius).